Here is a 216-residue protein sequence, read N- to C-terminus: 2-phospho-L-lactate guanylyltransferase (216 aa).

Belongs to the CofC family. As to quaternary structure, homodimer.

It catalyses the reaction (2S)-2-phospholactate + GTP + H(+) = (2S)-lactyl-2-diphospho-5'-guanosine + diphosphate. Its pathway is cofactor biosynthesis; coenzyme F420 biosynthesis. In terms of biological role, guanylyltransferase that catalyzes the activation of (2S)-2-phospholactate (2-PL) as (2S)-lactyl-2-diphospho-5'-guanosine, via the condensation of 2-PL with GTP. It is involved in the biosynthesis of coenzyme F420, a hydride carrier cofactor. The polypeptide is 2-phospho-L-lactate guanylyltransferase (Methanocaldococcus infernus (strain DSM 11812 / JCM 15783 / ME)).